We begin with the raw amino-acid sequence, 130 residues long: MVRMNVLADALKCINNAEKRGKRQVLLRPCSKVIIKFLTVMMKHGYIGEFEIVDDHRSGKIVVNLTGRLNKCGVISPRFDVPINDIEKWTNNLLPSRQFGYVVLTTSGGIMDHEEARRKHLGGKILGFFF.

This sequence belongs to the universal ribosomal protein uS8 family.

This Drosophila melanogaster (Fruit fly) protein is Small ribosomal subunit protein uS8A (RpS15Aa).